We begin with the raw amino-acid sequence, 421 residues long: Mitochondrial tRNA-specific 2-thiouridylase 1 (421 aa).

ATP is bound by residues 10–17 (ALSGGVDS) and Met-36. The tract at residues 96–98 (NPD) is interaction with target base in tRNA. Cys-101 acts as the Nucleophile in catalysis. The cysteines at positions 101 and 222 are disulfide-linked. Gly-126 lines the ATP pocket. The interaction with tRNA stretch occupies residues 171–173 (KDQ). Residue Cys-222 is the Cysteine persulfide intermediate of the active site. Residues 334 to 335 (RH) are interaction with tRNA. Positions 395–421 (KGQRRAGMATESPSDSPEDGPGLSPLL) are disordered.

This sequence belongs to the MnmA/TRMU family. As to expression, ubiquitous. Abundantly expressed in tissues with high metabolic rates including heart, liver, kidney, and brain.

It localises to the mitochondrion. The catalysed reaction is 5-taurinomethyluridine(34) in tRNA + S-sulfanyl-L-cysteinyl-[protein] + AH2 + ATP = 5-taurinomethyl-2-thiouridine(34) in tRNA + L-cysteinyl-[protein] + A + AMP + diphosphate + H(+). Functionally, catalyzes the 2-thiolation of uridine at the wobble position (U34) of mitochondrial tRNA(Lys), tRNA(Glu) and tRNA(Gln). Required for the formation of 5-taurinomethyl-2-thiouridine (tm5s2U) of mitochondrial tRNA(Lys), tRNA(Glu), and tRNA(Gln) at the wobble position. ATP is required to activate the C2 atom of the wobble base. The polypeptide is Mitochondrial tRNA-specific 2-thiouridylase 1 (TRMU) (Homo sapiens (Human)).